We begin with the raw amino-acid sequence, 422 residues long: Ribonuclease Y (422 aa).

The region spanning 112 to 172 (TTNIVKLPSD…IRREIATRTL (61 aa)) is the KH domain. One can recognise an HD domain in the interval 238 to 331 (VLAHSIEVAK…VAIADSISAS (94 aa)).

Belongs to the RNase Y family.

Endoribonuclease that initiates mRNA decay. The sequence is that of Ribonuclease Y from Mycoplasma mycoides.